The chain runs to 239 residues: 1-(5-phosphoribosyl)-5-[(5-phosphoribosylamino)methylideneamino] imidazole-4-carboxamide isomerase (239 aa).

The Proton acceptor role is filled by D7. D129 acts as the Proton donor in catalysis.

This sequence belongs to the HisA/HisF family.

It is found in the cytoplasm. The enzyme catalyses 1-(5-phospho-beta-D-ribosyl)-5-[(5-phospho-beta-D-ribosylamino)methylideneamino]imidazole-4-carboxamide = 5-[(5-phospho-1-deoxy-D-ribulos-1-ylimino)methylamino]-1-(5-phospho-beta-D-ribosyl)imidazole-4-carboxamide. Its pathway is amino-acid biosynthesis; L-histidine biosynthesis; L-histidine from 5-phospho-alpha-D-ribose 1-diphosphate: step 4/9. The polypeptide is 1-(5-phosphoribosyl)-5-[(5-phosphoribosylamino)methylideneamino] imidazole-4-carboxamide isomerase (Lactiplantibacillus plantarum (strain ATCC BAA-793 / NCIMB 8826 / WCFS1) (Lactobacillus plantarum)).